The primary structure comprises 674 residues: MPSYTVTVATGSQWFAGTDDYIYLSLVGSAGCSEKHLLDKPFYNDFERGAVDSYDVTVDEELGEIQLVRIEKRKYWLNDDWYLKYITLKTPHGDYIEFPCYRWITGDVEVVLRDGRAKLARDDQIHILKQHRRKELETRQKQYRWMEWNPGFPLSIDAKCHKDLPRDIQFDSEKGVDFVLNYSKAMENLFINRFMHMFQSSWNDFADFEKIFVKISNTISERVMNHWQEDLMFGYQFLNGCNPVLIRRCTELPEKLPVTTEMVECSLERQLSLEQEVQQGNIFIVDFELLDGIDANKTDPCTLQFLAAPICLLYKNLANKIVPIAIQLNQIPGDENPIFLPSDAKYDWLLAKIWVRSSDFHVHQTITHLLRTHLVSEVFGIAMYRQLPAVHPIFKLLVAHVRFTIAINTKAREQLICECGLFDKANATGGGGHVQMVQRAMKDLTYASLCFPEAIKARGMESKEDIPYYFYRDDGLLVWEAIRTFTAEVVDIYYEGDQVVEEDPELQDFVNDVYVYGMRGRKSSGFPKSVKSREQLSEYLTVVIFTASAQHAAVNFGQYDWCSWIPNAPPTMRAPPPTAKGVVTIEQIVDTLPDRGRSCWHLGAVWALSQFQENELFLGMYPEEHFIEKPVKEAMARFRKNLEAIVSVIAERNKKKQLPYYYLSPDRIPNSVAI.

The 117-residue stretch at 2-118 (PSYTVTVATG…EVVLRDGRAK (117 aa)) folds into the PLAT domain. 8 residues coordinate Ca(2+): Gly-17, Thr-18, Asp-19, Asn-44, Asp-45, Glu-47, Asp-79, and Asp-80. A Lipoxygenase domain is found at 119–674 (LARDDQIHIL…PDRIPNSVAI (556 aa)). Ser-272 is subject to Phosphoserine; by MAPKAPK2. Residues His-368 and His-373 each contribute to the Fe cation site. Phosphoserine; by PKA is present on Ser-524. Residues His-551, Asn-555, and Ile-674 each contribute to the Fe cation site.

It belongs to the lipoxygenase family. In terms of assembly, homodimer. Interacts with ALOX5AP and LTC4S. Interacts with COTL1, the interaction is required for stability and efficient catalytic activity. Interacts with PIK3R1; this interaction bridges ALOX5 with CD40 after CD40 ligation in B cells and leads to the production of reactive oxygen species (ROS). Interacts (via PLAT domain) with DICER1 (via Dicer dsRNA-binding fold domain); this interaction enhances arachidonate 5-lipoxygenase activity and modifies the miRNA precursor processing activity of DICER1. Fe cation is required as a cofactor. In terms of processing, serine phosphorylation by MAPKAPK2 is stimulated by arachidonic acid. Phosphorylation on Ser-524 by PKA has an inhibitory effect. Phosphorylation on Ser-272 prevents export from the nucleus. Phosphorylation at Ser-524 is stimulated by 8-bromo-3',5'-cyclic AMP or prostaglandin E2.

The protein localises to the cytoplasm. Its subcellular location is the nucleus matrix. It is found in the nucleus membrane. It localises to the perinuclear region. The protein resides in the cytosol. The protein localises to the nucleus envelope. Its subcellular location is the nucleus intermembrane space. The catalysed reaction is (5Z,8Z,11Z,14Z)-eicosatetraenoate + O2 = leukotriene A4 + H2O. The enzyme catalyses 18-HEPE + O2 = (5S)-hydroperoxy-18-hydroxy-(7E,9E,11Z,14Z,16E)-eicosapentaenoate. It carries out the reaction (18R)-hydroxy-(5Z,8Z,11Z,14Z,16E)-eicosapentaenoate + O2 = (5S)-hydroperoxy-(18R)-hydroxy-(6E,8Z,11Z,14Z,16E)-eicosapentaenoate. It catalyses the reaction (18S)-hydroxy-(5Z,8Z,11Z,14Z,16E)-eicosapentaenoate + O2 = (5S)-hydroperoxy-(18S)-hydroxy-(6E,8Z,11Z,14Z,16E)-eicosapentaenoate. The catalysed reaction is (5S)-hydroperoxy-(18S)-hydroxy-(6E,8Z,11Z,14Z,16E)-eicosapentaenoate = (5S,6S)-epoxy-(18S)-hydroxy-(7E,9E,11Z,14Z,16E)-eicosapentaenoate + H2O. The enzyme catalyses (5S)-hydroperoxy-(18R)-hydroxy-(6E,8Z,11Z,14Z,16E)-eicosapentaenoate = (5S,6S)-epoxy-(18R)-hydroxy-(7E,9E,11Z,14Z,16E)-eicosapentaenoate + H2O. It carries out the reaction (5S)-hydroperoxy-18-hydroxy-(7E,9E,11Z,14Z,16E)-eicosapentaenoate = (5S,6S)-epoxy-18-hydroxy-(7E,9E,11Z,14Z,16E)-eicosapentaenoate + H2O. It catalyses the reaction (5Z,8Z,11Z,14Z)-eicosatetraenoate + O2 = (5S)-hydroperoxy-(6E,8Z,11Z,14Z)-eicosatetraenoate. The catalysed reaction is (15S)-hydroxy-(5Z,8Z,11Z,13E)-eicosatetraenoate + O2 = (5S)-hydroperoxy-(15S)-hydroxy-(6E,8Z,11Z,13E)-eicosatetraenoate. The enzyme catalyses (5S)-hydroperoxy-(6E,8Z,11Z,14Z)-eicosatetraenoate = leukotriene A4 + H2O. It carries out the reaction (5Z,8Z,11Z,14Z)-eicosatetraenoate + O2 = (8S)-hydroperoxy-(5Z,9E,11Z,14Z)-eicosatetraenoate. It catalyses the reaction (5Z,8Z,11Z,14Z)-eicosatetraenoate + O2 = (12S)-hydroperoxy-(5Z,8Z,10E,14Z)-eicosatetraenoate. The catalysed reaction is (5Z,8Z)-eicosadienoate + O2 = (5S)-hydroperoxy-(6E,8Z)-eicosadienoate. The enzyme catalyses (12S)-hydroxy-(5Z,8Z,10E,14Z)-eicosatetraenoate + O2 = (5S)-hydroperoxy-(12S)-hydroxy-(6E,8Z,10E,14Z)-eicosatetraenoate. It carries out the reaction (5Z,8Z,11Z,14Z,17Z)-eicosapentaenoate + O2 = 5-hydroperoxy-(6E,8Z,11Z,14Z,17Z)-eicosapentaenoate. It catalyses the reaction (4Z,7Z,10Z,13Z,16Z,19Z)-docosahexaenoate + O2 = (14S)-hydroperoxy-(4Z,7Z,10Z,12E,16Z,19Z)-docosahexaenoate. The catalysed reaction is (4Z,7Z,10Z,13Z,16Z,19Z)-docosahexaenoate + O2 = (7S)-hydroperoxy-(4Z,8E,10Z,13Z,16Z,19Z)-docosahexaenoate. The enzyme catalyses (4Z,7Z,10Z,13Z,16Z,19Z)-docosahexaenoate + O2 = (17S)-hydroperoxy-(4Z,7Z,10Z,13Z,15E,19Z)-docosahexaenoate. It participates in lipid metabolism; leukotriene A4 biosynthesis. With respect to regulation, undergoes a sequential loss of the oxygenase and pseudoperoxidase activities which is dependent on the structural characteristics of the substrate for the reaction, on oxygen concentration and on exposure to phospholipids and calcium. 15-HETE and other 15-mono-hydroxyeicosanoids exhibit the highest inhibitory potencies in their capability of suppressing 5-lipoxygenation of arachidonic acid, whereas the other HETEs, (5S,15S)-dihydroxy-(6E,8Z,11Z,13E)-eicosatetraenoic acid (5,15-diHETE) as well as octadecanoids, are modest or poor inhibitors. The formation of (5S)-hydroperoxy-(15S)-hydroxy-(6E,8Z,11Z,13E)-eicosatetraenoate is strongly stimulated by either hydroperoxypolyenoic fatty acids or arachidonic acid. Arachidonate 5-lipoxygenase and leukotriene A4 synthase activities are allosterically increased by ATP. Functionally, catalyzes the oxygenation of arachidonate ((5Z,8Z,11Z,14Z)-eicosatetraenoate) to 5-hydroperoxyeicosatetraenoate (5-HPETE) followed by the dehydration to 5,6- epoxyeicosatetraenoate (Leukotriene A4/LTA4), the first two steps in the biosynthesis of leukotrienes, which are potent mediators of inflammation. Also catalyzes the oxygenation of arachidonate into 8-hydroperoxyicosatetraenoate (8-HPETE) and 12-hydroperoxyicosatetraenoate (12-HPETE). Displays lipoxin synthase activity being able to convert (15S)-HETE into a conjugate tetraene. Although arachidonate is the preferred substrate, this enzyme can also metabolize oxidized fatty acids derived from arachidonate such as (15S)-HETE, eicosapentaenoate (EPA) such as (18R)- and (18S)-HEPE or docosahexaenoate (DHA) which lead to the formation of specialized pro-resolving mediators (SPM) lipoxin and resolvins E and D respectively, therefore it participates in anti-inflammatory responses. Oxidation of DHA directly inhibits endothelial cell proliferation and sprouting angiogenesis via peroxisome proliferator-activated receptor gamma (PPARgamma). It does not catalyze the oxygenation of linoleic acid and does not convert (5S)-HETE to lipoxin isomers. In addition to inflammatory processes, it participates in dendritic cell migration, wound healing through an antioxidant mechanism based on heme oxygenase-1 (HO-1) regulation expression, monocyte adhesion to the endothelium via ITGAM expression on monocytes. Moreover, it helps establish an adaptive humoral immunity by regulating primary resting B cells and follicular helper T cells and participates in the CD40-induced production of reactive oxygen species (ROS) after CD40 ligation in B cells through interaction with PIK3R1 that bridges ALOX5 with CD40. May also play a role in glucose homeostasis, regulation of insulin secretion and palmitic acid-induced insulin resistance via AMPK. Can regulate bone mineralization and fat cell differentiation increases in induced pluripotent stem cells. This chain is Polyunsaturated fatty acid 5-lipoxygenase, found in Homo sapiens (Human).